Reading from the N-terminus, the 90-residue chain is MNDSVKTSLKRTLVGKVVSNKMDKTVTVLVEHRVKHPIYGKYVVRSKKYHAHDDANTYNEGDLVEIQETRPISKTKAWVVARLVEAARVI.

This sequence belongs to the universal ribosomal protein uS17 family. In terms of assembly, part of the 30S ribosomal subunit.

One of the primary rRNA binding proteins, it binds specifically to the 5'-end of 16S ribosomal RNA. This chain is Small ribosomal subunit protein uS17, found in Paraburkholderia phytofirmans (strain DSM 17436 / LMG 22146 / PsJN) (Burkholderia phytofirmans).